We begin with the raw amino-acid sequence, 190 residues long: Probable oligoribonuclease (190 aa).

An Exonuclease domain is found at 19–181; it reads MVWVDLEMTG…QDIEESIEEL (163 aa). Tyr140 is a catalytic residue.

This sequence belongs to the oligoribonuclease family.

Functionally, 3'-to-5' exoribonuclease specific for small oligoribonucleotides. The chain is Probable oligoribonuclease (rexo2-1) from Dictyostelium discoideum (Social amoeba).